A 147-amino-acid chain; its full sequence is Lysozyme C-3 (147 aa).

A signal peptide spans 1–18 (MKALIILGFLFLSVAVQG). The 129-residue stretch at 19 to 147 (KVFERCELAR…VSSYVQGCTL (129 aa)) folds into the C-type lysozyme domain. Disulfide bonds link C24–C145, C48–C133, C83–C99, and C95–C113. Active-site residues include E53 and D71.

The protein belongs to the glycosyl hydrolase 22 family. As to quaternary structure, monomer. In terms of tissue distribution, stomach-specific.

The enzyme catalyses Hydrolysis of (1-&gt;4)-beta-linkages between N-acetylmuramic acid and N-acetyl-D-glucosamine residues in a peptidoglycan and between N-acetyl-D-glucosamine residues in chitodextrins.. Lysozymes have primarily a bacteriolytic function; those in tissues and body fluids are associated with the monocyte-macrophage system and enhance the activity of immunoagents. This Bos taurus (Bovine) protein is Lysozyme C-3 (LYZ3).